The following is a 148-amino-acid chain: Putative pre-16S rRNA nuclease (148 aa).

The protein belongs to the YqgF nuclease family.

Its subcellular location is the cytoplasm. Its function is as follows. Could be a nuclease involved in processing of the 5'-end of pre-16S rRNA. In Chlamydia trachomatis serovar A (strain ATCC VR-571B / DSM 19440 / HAR-13), this protein is Putative pre-16S rRNA nuclease.